The primary structure comprises 1421 residues: Envelopment polyprotein (1421 aa).

The first 20 residues, 1-20 (MEGSYWWLSLLALLAWGANG), serve as a signal peptide directing secretion. The Lumenal segment spans residues 21–479 (ESTSPAETSP…CRMSHRPRTC (459 aa)). A compositionally biased stretch (low complexity) spans 22–31 (STSPAETSPA). The disordered stretch occupies residues 22 to 42 (STSPAETSPAPTTPNPPVVNP). N97 and N346 each carry an N-linked (GlcNAc...) asparagine; by host glycan. The helical transmembrane segment at 480-500 (LALFIWLGAGYGITCIAGYMV) threads the bilayer. The Cytoplasmic portion of the chain corresponds to 501–610 (YYAILALSML…KLGTLLKRLS (110 aa)). Residues 611–631 (WVTVFLCLFLTAIAPVQGQVT) traverse the membrane as a helical segment. The Lumenal segment spans residues 632–643 (TSPVLPSNQSTE). N639 is a glycosylation site (N-linked (GlcNAc...) asparagine; by host). Residues 644–664 (CTLLPPPVFLIFSAVLMSKTL) form a helical membrane-spanning segment. Residues 665–708 (KRMGPVNKVGAAGHSARRTNSPKNLYKSKQIANTKSGPREPRRR) are Cytoplasmic-facing. The chain crosses the membrane as a helical span at residues 709–729 (VVVKALLILTASSALQSIHLA). A propeptide spanning residues 722–776 (ALQSIHLAQAFDSGSLPEGAWEEEMQLVQGCNQECSLEEDECSCPDGQSMTRKLL) is cleaved from the precursor. Over 730–1330 (QAFDSGSLPE…GSFFRNYLGS (601 aa)) the chain is Lumenal. 2 cysteine pairs are disulfide-bonded: C901/C1096 and C929/C934. Residues N1081 and N1299 are each glycosylated (N-linked (GlcNAc...) asparagine; by host). Residues 1331 to 1351 (ITLGIVLTLLPVAVVLLFFCY) form a helical membrane-spanning segment. The Cytoplasmic segment spans residues 1352 to 1421 (GDKLFKLCSC…GKGKNYKELV (70 aa)).

This sequence belongs to the nairovirus envelope glycoprotein family. Heterodimer with glycoprotein C; in prefusion state. As to quaternary structure, heterodimer with glycoprotein N; in prefusion state. Homotrimeric; in postfusion state. In terms of processing, specific enzymatic cleavage by host MBTPS1/S1P/SKI-1 endopeptidase yield glycoprotein N. Specific enzymatic cleavages by host furin-like protease and MBTPS1/S1P endopeptidase yield GP38. Post-translationally, glycosylated.

Its subcellular location is the host endoplasmic reticulum membrane. It is found in the virion membrane. The protein resides in the host Golgi apparatus membrane. Its function is as follows. Glycoprotein N and glycoprotein C interact with each other and are present at the surface of the virion. Glycoprotein N probably locks the Gn-Gc complex in a prefusion state. Glycoprotein N and glycoprotein C are able to attach the virion to host cell receptors. This attachment induces virion internalization predominantly through clathrin-dependent endocytosis. Glycoprotein C and glycoprotein N interact with each other and are present at the surface of the virion. The spikes at the surface of the virion are formed by an N-terminal extension of glycoprotein C. Glycoprotein N and glycoprotein C are able to attach the virion to host cell receptors. This attachment induces virion internalization predominantly through clathrin-dependent endocytosis. Class II fusion protein that promotes fusion of viral membrane with host endosomal membrane after endocytosis of the virion. Exposure to potassium is necessary for the conformational change leading to fusion. This is Envelopment polyprotein (GP) from Ixodes.